A 396-amino-acid polypeptide reads, in one-letter code: Elongation factor Tu-B (396 aa).

The tr-type G domain occupies 10 to 206 (KLHVNVGTIG…ALDTFIPDPT (197 aa)). The G1 stretch occupies residues 19–26 (GHVDHGKT). A GTP-binding site is contributed by 19–26 (GHVDHGKT). Thr-26 is a binding site for Mg(2+). The interval 60-64 (GITIS) is G2. Residues 81-84 (DCPG) form a G3 region. GTP-binding positions include 81–85 (DCPGH) and 136–139 (NKAD). Residues 136–139 (NKAD) form a G4 region. The G5 stretch occupies residues 174 to 176 (SAR).

Belongs to the TRAFAC class translation factor GTPase superfamily. Classic translation factor GTPase family. EF-Tu/EF-1A subfamily. In terms of assembly, monomer.

Its subcellular location is the cytoplasm. It catalyses the reaction GTP + H2O = GDP + phosphate + H(+). GTP hydrolase that promotes the GTP-dependent binding of aminoacyl-tRNA to the A-site of ribosomes during protein biosynthesis. The protein is Elongation factor Tu-B of Xanthomonas campestris pv. campestris (strain ATCC 33913 / DSM 3586 / NCPPB 528 / LMG 568 / P 25).